Here is a 1140-residue protein sequence, read N- to C-terminus: Eukaryotic translation initiation factor 3 subunit A (1140 aa).

Positions 319–501 (LQRMAAHVLL…NSIYFGTDLT (183 aa)) constitute a PCI domain. 2 stretches are compositionally biased toward basic and acidic residues: residues 588–623 (QNNA…EERE) and 829–899 (AAEE…RGGD). Disordered regions lie at residues 588–630 (QNNA…HQNE) and 829–1140 (AAEE…VKRR). The residue at position 908 (Ser-908) is a Phosphoserine. Composition is skewed to basic and acidic residues over residues 920–976 (ERND…EPDS), 990–1051 (SRDD…EPQR), 1059–1086 (DAPR…RGDQ), and 1109–1130 (TREE…KAGD).

The protein belongs to the eIF-3 subunit A family. As to quaternary structure, component of the eukaryotic translation initiation factor 3 (eIF-3) complex. The eIF-3 complex interacts with pix.

It localises to the cytoplasm. In terms of biological role, RNA-binding component of the eukaryotic translation initiation factor 3 (eIF-3) complex, which is involved in protein synthesis of a specialized repertoire of mRNAs and, together with other initiation factors, stimulates binding of mRNA and methionyl-tRNAi to the 40S ribosome. The eIF-3 complex specifically targets and initiates translation of a subset of mRNAs involved in cell proliferation. This Drosophila melanogaster (Fruit fly) protein is Eukaryotic translation initiation factor 3 subunit A.